Consider the following 145-residue polypeptide: Protein SprT-like (145 aa).

A SprT-like domain is found at 5 to 141; that stretch reads NYVKQVSVED…CGRCMGKLRL (137 aa). Histidine 64 lines the Zn(2+) pocket. The active site involves glutamate 65. Histidine 68 contacts Zn(2+).

Belongs to the SprT family. Zn(2+) is required as a cofactor.

The protein localises to the cytoplasm. This is Protein SprT-like from Streptococcus sanguinis (strain SK36).